Here is a 456-residue protein sequence, read N- to C-terminus: Signal recognition particle receptor FtsY (456 aa).

A compositionally biased stretch (basic and acidic residues) spans 1 to 26 (MFDGLKKKLNRFRNDVEETAEEKAEA). A disordered region spans residues 1-163 (MFDGLKKKLN…DEDDSSGPGR (163 aa)). Residues 27 to 39 (AADEAESDADAEA) show a composition bias toward acidic residues. Positions 40 to 62 (ESAPADTDNAAVEPEASEPAAAD) are enriched in low complexity. Residues 63–81 (PDADAVGDADAGSEADAVD) are compositionally biased toward acidic residues. Positions 82–97 (AADAPADAESSSAAVE) are enriched in low complexity. Residues 112–134 (PDSEVDAGADTGDEPSGEPTADE) show a composition bias toward acidic residues. GTP contacts are provided by residues 265–272 (GINGVGKT), 347–351 (DTAGR), and 405–408 (TKAD).

This sequence belongs to the GTP-binding SRP family. FtsY subfamily. As to quaternary structure, part of the signal recognition particle protein translocation system, which is composed of SRP and FtsY.

It localises to the cell membrane. The protein localises to the cytoplasm. The enzyme catalyses GTP + H2O = GDP + phosphate + H(+). Involved in targeting and insertion of nascent membrane proteins into the cytoplasmic membrane. Acts as a receptor for the complex formed by the signal recognition particle (SRP) and the ribosome-nascent chain (RNC). This Haloferax volcanii (strain ATCC 29605 / DSM 3757 / JCM 8879 / NBRC 14742 / NCIMB 2012 / VKM B-1768 / DS2) (Halobacterium volcanii) protein is Signal recognition particle receptor FtsY.